The chain runs to 202 residues: T-cell surface glycoprotein CD3 epsilon chain (202 aa).

A signal peptide spans 1–21 (MQSRNLWRILGLCLLSVGAWG). Residues 22-122 (QDEDFKASDD…VCANCIEVNL (101 aa)) are Extracellular-facing. Residues 37–107 (PEKRFKVSIS…ADSIKEKSYL (71 aa)) form the Ig-like domain. Residues cysteine 54 and cysteine 96 are joined by a disulfide bond. A helical transmembrane segment spans residues 123-143 (MAVVTIIVADICLTLGLLLMV). Over 144 to 202 (YYWSKTRKANAKPVMRGTGAGSRPRGQNKEKPPPVPNPDYEPIRKGQQDLYSGLNQRGI) the chain is Cytoplasmic. Residues 156 to 202 (PVMRGTGAGSRPRGQNKEKPPPVPNPDYEPIRKGQQDLYSGLNQRGI) are disordered. Residues 170–187 (QNKEKPPPVPNPDYEPIR) form an NUMB-binding region region. In terms of domain architecture, ITAM spans 173 to 200 (EKPPPVPNPDYEPIRKGQQDLYSGLNQR). The proline-rich sequence stretch occupies residues 174–181 (KPPPVPNP). 2 positions are modified to phosphotyrosine: tyrosine 183 and tyrosine 194. A compositionally biased stretch (polar residues) spans 192 to 202 (DLYSGLNQRGI).

The TCR-CD3 complex is composed of a CD3D/CD3E and a CD3G/CD3E heterodimers that preferentially associate with TCRalpha and TCRbeta, respectively, to form TCRalpha/CD3E/CD3G and TCRbeta/CD3G/CD3E trimers. In turn, the hexamer interacts with CD3Z homodimer to form the TCR-CD3 complex. Alternatively, TCRalpha and TCRbeta can be replaced by TCRgamma and TCRdelta. Interacts with CD6. Interacts (via Proline-rich sequence) with NCK1; the interaction is ligand dependent but independent of tyrosine kinase activation. Phosphorylated on Tyr residues after T-cell receptor triggering by LCK in association with CD4/CD8.

It is found in the cell membrane. Functionally, part of the TCR-CD3 complex present on T-lymphocyte cell surface that plays an essential role in adaptive immune response. When antigen presenting cells (APCs) activate T-cell receptor (TCR), TCR-mediated signals are transmitted across the cell membrane by the CD3 chains CD3D, CD3E, CD3G and CD3Z. All CD3 chains contain immunoreceptor tyrosine-based activation motifs (ITAMs) in their cytoplasmic domain. Upon TCR engagement, these motifs become phosphorylated by Src family protein tyrosine kinases LCK and FYN, resulting in the activation of downstream signaling pathways. In addition of this role of signal transduction in T-cell activation, CD3E plays an essential role in correct T-cell development. Also participates in internalization and cell surface down-regulation of TCR-CD3 complexes via endocytosis sequences present in CD3E cytosolic region. In addition to its role as a TCR coreceptor, it serves as a receptor for ITPRIPL1. Ligand recognition inhibits T-cell activation by promoting interaction with NCK1, which prevents CD3E-ZAP70 interaction and blocks the ERK-NFkB signaling cascade and calcium influx. The polypeptide is T-cell surface glycoprotein CD3 epsilon chain (CD3E) (Canis lupus familiaris (Dog)).